Reading from the N-terminus, the 267-residue chain is Undecaprenyl-diphosphatase (267 aa).

7 helical membrane passes run 39–59 (QGLA…ILYF), 87–107 (WMIA…KDFI), 111–131 (LRSA…LWWV), 149–169 (ALFI…RSGA), 189–209 (FLMS…KLVT), 218–238 (ALSI…HAFL), and 244–264 (VGMM…IAFL).

The protein belongs to the UppP family.

It localises to the cell inner membrane. The enzyme catalyses di-trans,octa-cis-undecaprenyl diphosphate + H2O = di-trans,octa-cis-undecaprenyl phosphate + phosphate + H(+). Catalyzes the dephosphorylation of undecaprenyl diphosphate (UPP). Confers resistance to bacitracin. The protein is Undecaprenyl-diphosphatase of Photobacterium profundum (strain SS9).